We begin with the raw amino-acid sequence, 78 residues long: Small ribosomal subunit protein uS17 (78 aa).

The protein belongs to the universal ribosomal protein uS17 family. In terms of assembly, part of the 30S ribosomal subunit.

One of the primary rRNA binding proteins, it binds specifically to the 5'-end of 16S ribosomal RNA. The protein is Small ribosomal subunit protein uS17 of Sinorhizobium fredii (strain NBRC 101917 / NGR234).